A 101-amino-acid chain; its full sequence is Apolipoprotein C-III (101 aa).

Residues 1-20 (MQPRMLLIVALVALLASARA) form the signal peptide. Methionine 64 is subject to Methionine sulfoxide. The interval 69–101 (KSLKGYWSKFTDKFTGLWESGPEDQLTTPTLEP) is lipid-binding. A glycan (O-linked (GalNAc...) threonine) is linked at threonine 96.

This sequence belongs to the apolipoprotein C3 family. Post-translationally, the most abundant glycoforms are characterized by an O-linked disaccharide galactose linked to N-acetylgalactosamine (Gal-GalNAc), further modified with up to 3 sialic acid residues. Less abundant glycoforms are characterized by more complex and fucosylated glycan moieties. O-glycosylated on Thr-96 with a core 1 or possibly core 8 glycan. In terms of tissue distribution, synthesized predominantly in liver and to a lesser degree in intestine.

It localises to the secreted. Its function is as follows. Component of triglyceride-rich very low density lipoproteins (VLDL) and high density lipoproteins (HDL) in plasma. Plays a multifaceted role in triglyceride homeostasis. Intracellularly, promotes hepatic very low density lipoprotein 1 (VLDL1) assembly and secretion; extracellularly, attenuates hydrolysis and clearance of triglyceride-rich lipoproteins (TRLs). Impairs the lipolysis of TRLs by inhibiting lipoprotein lipase and the hepatic uptake of TRLs by remnant receptors. Formed of several curved helices connected via semiflexible hinges, so that it can wrap tightly around the curved micelle surface and easily adapt to the different diameters of its natural binding partners. This chain is Apolipoprotein C-III (Apoc3), found in Rattus norvegicus (Rat).